A 285-amino-acid polypeptide reads, in one-letter code: tRNA pseudouridine synthase B (285 aa).

D38 functions as the Nucleophile in the catalytic mechanism.

This sequence belongs to the pseudouridine synthase TruB family. Type 1 subfamily.

It catalyses the reaction uridine(55) in tRNA = pseudouridine(55) in tRNA. Functionally, responsible for synthesis of pseudouridine from uracil-55 in the psi GC loop of transfer RNAs. This is tRNA pseudouridine synthase B from Geobacillus kaustophilus (strain HTA426).